Reading from the N-terminus, the 430-residue chain is Tryptophan synthase beta chain (430 aa).

The residue at position 95 (K95) is an N6-(pyridoxal phosphate)lysine.

Belongs to the TrpB family. As to quaternary structure, tetramer of two alpha and two beta chains. Pyridoxal 5'-phosphate is required as a cofactor.

It carries out the reaction (1S,2R)-1-C-(indol-3-yl)glycerol 3-phosphate + L-serine = D-glyceraldehyde 3-phosphate + L-tryptophan + H2O. It functions in the pathway amino-acid biosynthesis; L-tryptophan biosynthesis; L-tryptophan from chorismate: step 5/5. In terms of biological role, the beta subunit is responsible for the synthesis of L-tryptophan from indole and L-serine. In Halobacterium salinarum (strain ATCC 29341 / DSM 671 / R1), this protein is Tryptophan synthase beta chain.